Consider the following 198-residue polypeptide: FMN-dependent NADH:quinone oxidoreductase (198 aa).

FMN is bound by residues Ser9 and Met95–Phe98.

This sequence belongs to the azoreductase type 1 family. Homodimer. Requires FMN as cofactor.

It catalyses the reaction 2 a quinone + NADH + H(+) = 2 a 1,4-benzosemiquinone + NAD(+). The catalysed reaction is N,N-dimethyl-1,4-phenylenediamine + anthranilate + 2 NAD(+) = 2-(4-dimethylaminophenyl)diazenylbenzoate + 2 NADH + 2 H(+). Its function is as follows. Quinone reductase that provides resistance to thiol-specific stress caused by electrophilic quinones. Also exhibits azoreductase activity. Catalyzes the reductive cleavage of the azo bond in aromatic azo compounds to the corresponding amines. This is FMN-dependent NADH:quinone oxidoreductase from Alcanivorax borkumensis (strain ATCC 700651 / DSM 11573 / NCIMB 13689 / SK2).